The primary structure comprises 492 residues: Catalase isozyme 1 (492 aa).

Residues His-65 and Asn-138 contribute to the active site. A heme-binding site is contributed by Tyr-348.

It belongs to the catalase family. Homotetramer. Heme serves as cofactor. In terms of tissue distribution, high expression in seeds and early seedlings.

The protein resides in the glyoxysome. It carries out the reaction 2 H2O2 = O2 + 2 H2O. Occurs in almost all aerobically respiring organisms and serves to protect cells from the toxic effects of hydrogen peroxide. The chain is Catalase isozyme 1 (CAT1) from Cucurbita pepo (Vegetable marrow).